The chain runs to 115 residues: NADH-ubiquinone oxidoreductase chain 3 (115 aa).

Helical transmembrane passes span 3-23 (FALI…ITFW), 55-75 (FFLV…LLPL), and 84-104 (LPLM…SLAY).

This sequence belongs to the complex I subunit 3 family. In terms of assembly, core subunit of respiratory chain NADH dehydrogenase (Complex I) which is composed of 45 different subunits. Interacts with TMEM186. Interacts with TMEM242.

It localises to the mitochondrion inner membrane. It carries out the reaction a ubiquinone + NADH + 5 H(+)(in) = a ubiquinol + NAD(+) + 4 H(+)(out). Functionally, core subunit of the mitochondrial membrane respiratory chain NADH dehydrogenase (Complex I) which catalyzes electron transfer from NADH through the respiratory chain, using ubiquinone as an electron acceptor. Essential for the catalytic activity of complex I. This is NADH-ubiquinone oxidoreductase chain 3 from Gorilla gorilla gorilla (Western lowland gorilla).